The following is an 861-amino-acid chain: Probable linoleate 9S-lipoxygenase 3 (861 aa).

A PLAT domain is found at phenylalanine 33–alanine 160. The Lipoxygenase domain maps to proline 163–isoleucine 861. A disordered region spans residues threonine 220–glutamate 247. The Fe cation site is built by histidine 522, histidine 527, histidine 713, asparagine 717, and isoleucine 861.

It belongs to the lipoxygenase family. Monomer. It depends on Fe cation as a cofactor. In terms of tissue distribution, expressed in tubers and roots. Not detected in leaves, flowers, stems, shoot tips, or axillary buds.

It is found in the cytoplasm. The enzyme catalyses (9Z,12Z)-octadecadienoate + O2 = (9S)-hydroperoxy-(10E,12Z)-octadecadienoate. It participates in lipid metabolism; oxylipin biosynthesis. Plant lipoxygenases may be involved in a number of diverse aspects of plant physiology including growth and development, pest resistance, and senescence or responses to wounding. Catalyzes the hydroperoxidation of lipids containing a cis,cis-1,4-pentadiene structure. This Solanum tuberosum (Potato) protein is Probable linoleate 9S-lipoxygenase 3 (LOX1.3).